The sequence spans 483 residues: MISADLAILTPEIVLSLFAMAGLLGAVYTSKDALASAMCWGTAALFIIMAFYIGVTGNGAREAFDGMIIDDAFSRFAKITILLSAAAILMISQDYMAKADLLRFEFPVLIILAVVGMMIMVSAGDLIALYMGLELQSLALYVVAAMRRDSVRSTEAGLKYFVLGALSSGLLLYGSSLAYGFAGTTQFAGIIEAAQGGDMPLGLLFGLVFITAGLAFKVSAAPFHMWTPDVYEGSPTPITALFATAPKVAAMALFARVVHDAFGGVIGDWQQIVAFLAVVSMFLGAIAAIGQTDIKRLMAYSSISHMGFALMGLSAGTAQGVEAMLIYMAIYVAMNIGTFAFILTMERNGRHVTEISSLSAFASKEPTKALAILVMMFSLAGVPPLLGFFGKYAVLVAAVDAGLVWLAIAGVIASVIGAFYYIRIVYLMYFGEADEGALDGKMGLVPYVGLIAMALVIGLGWVPGVNLFGIEAPAETAAAMLIR.

Helical transmembrane passes span 7-27 (AILT…LGAV), 33-53 (ALAS…AFYI), 76-96 (FAKI…QDYM), 108-128 (VLII…DLIA), 161-181 (FVLG…AYGF), 196-216 (GGDM…GLAF), 235-255 (PTPI…ALFA), 272-292 (IVAF…IGQT), 297-317 (LMAY…SAGT), 323-343 (AMLI…AFIL), 369-389 (ALAI…LGFF), 402-422 (GLVW…FYYI), and 442-462 (MGLV…LGWV).

It belongs to the complex I subunit 2 family. As to quaternary structure, NDH-1 is composed of 14 different subunits. Subunits NuoA, H, J, K, L, M, N constitute the membrane sector of the complex.

Its subcellular location is the cell inner membrane. The enzyme catalyses a quinone + NADH + 5 H(+)(in) = a quinol + NAD(+) + 4 H(+)(out). In terms of biological role, NDH-1 shuttles electrons from NADH, via FMN and iron-sulfur (Fe-S) centers, to quinones in the respiratory chain. The immediate electron acceptor for the enzyme in this species is believed to be ubiquinone. Couples the redox reaction to proton translocation (for every two electrons transferred, four hydrogen ions are translocated across the cytoplasmic membrane), and thus conserves the redox energy in a proton gradient. This is NADH-quinone oxidoreductase subunit N from Jannaschia sp. (strain CCS1).